We begin with the raw amino-acid sequence, 481 residues long: Mechanosensory protein 2 (481 aa).

Residues 1 to 22 show a composition bias toward low complexity; the sequence is MSATMSSARNSVVSLSSNGSVK. Disordered stretches follow at residues 1–67 and 80–104; these read MSAT…MATR and SANS…GNGK. Positions 27 to 38 are enriched in polar residues; that stretch reads LVSNERSSSIQQ. Residues 86-104 are compositionally biased toward basic and acidic residues; the sequence is DSVKKEKQAEKDVEKGNGK. The helical transmembrane segment at 115-135 threads the bilayer; sequence GVCGWILTILSYLLIFFTLPI. The span at 403–421 shows a compositional bias: gly residues; that stretch reads EGGGGHGHSHGGGGGGLGS. Positions 403-481 are disordered; that stretch reads EGGGGHGHSH…SQLDPALLIR (79 aa). Residues 433–447 are compositionally biased toward low complexity; the sequence is SGPSTTTTSGRPLLR. Residues 463-473 are compositionally biased toward polar residues; the sequence is APNQSQTSVSQ.

It belongs to the band 7/mec-2 family. Component of a non-voltage-gated amiloride-sensitive cation channel complex (also called the degenerin channel complex) composed of at least the mec-2, mec-4, mec-6 and mec-10 subunits; the complex mediates mechanotransduction in touch cells. Interacts with mec-6 and mec-4.

It is found in the membrane. Subunit of an amiloride-sensitive cation channel (degenerin channel complex) permeable for sodium, potassium, lithium and N-methylglucamine, and required for mechanosensory transduction (touch sensitivity). Positively regulates the activity of the putative mechanosensory transduction channel. May link the mechanosensory channel and the microtubule cytoskeleton of the touch receptor neurons. Required for the function of a set of six touch receptor neurons. The sequence is that of Mechanosensory protein 2 from Caenorhabditis elegans.